Reading from the N-terminus, the 368-residue chain is Peptide chain release factor 2 (368 aa).

Gln-250 carries the N5-methylglutamine modification.

The protein belongs to the prokaryotic/mitochondrial release factor family. In terms of processing, methylated by PrmC. Methylation increases the termination efficiency of RF2.

Its subcellular location is the cytoplasm. In terms of biological role, peptide chain release factor 2 directs the termination of translation in response to the peptide chain termination codons UGA and UAA. This is Peptide chain release factor 2 from Rickettsia conorii (strain ATCC VR-613 / Malish 7).